The chain runs to 390 residues: Tryptophan synthase beta chain (390 aa).

Position 90 is an N6-(pyridoxal phosphate)lysine (Lys-90).

This sequence belongs to the TrpB family. As to quaternary structure, tetramer of two alpha and two beta chains. Requires pyridoxal 5'-phosphate as cofactor.

The enzyme catalyses (1S,2R)-1-C-(indol-3-yl)glycerol 3-phosphate + L-serine = D-glyceraldehyde 3-phosphate + L-tryptophan + H2O. It functions in the pathway amino-acid biosynthesis; L-tryptophan biosynthesis; L-tryptophan from chorismate: step 5/5. The beta subunit is responsible for the synthesis of L-tryptophan from indole and L-serine. The chain is Tryptophan synthase beta chain from Bacteroides fragilis (strain ATCC 25285 / DSM 2151 / CCUG 4856 / JCM 11019 / LMG 10263 / NCTC 9343 / Onslow / VPI 2553 / EN-2).